Here is a 458-residue protein sequence, read N- to C-terminus: ATP synthase subunit beta (458 aa).

An ATP-binding site is contributed by 148–155 (GGAGVGKT).

The protein belongs to the ATPase alpha/beta chains family. In terms of assembly, F-type ATPases have 2 components, CF(1) - the catalytic core - and CF(0) - the membrane proton channel. CF(1) has five subunits: alpha(3), beta(3), gamma(1), delta(1), epsilon(1). CF(0) has three main subunits: a(1), b(2) and c(9-12). The alpha and beta chains form an alternating ring which encloses part of the gamma chain. CF(1) is attached to CF(0) by a central stalk formed by the gamma and epsilon chains, while a peripheral stalk is formed by the delta and b chains.

It is found in the cell inner membrane. It catalyses the reaction ATP + H2O + 4 H(+)(in) = ADP + phosphate + 5 H(+)(out). Functionally, produces ATP from ADP in the presence of a proton gradient across the membrane. The catalytic sites are hosted primarily by the beta subunits. The sequence is that of ATP synthase subunit beta from Laribacter hongkongensis (strain HLHK9).